We begin with the raw amino-acid sequence, 139 residues long: Glucanase inhibitor protein 3 (139 aa).

One can recognise a Peptidase S1 domain in the interval 1 to 138; sequence VLTLEKPSKF…GIEWINSVIK (138 aa). Cystine bridges form between cysteine 61/cysteine 73 and cysteine 83/cysteine 114.

Belongs to the peptidase S1 family.

It is found in the secreted. Functionally, secreted effector that suppresses host plant glucan elicitor-mediated defense responses. Targets host endoglucanases and inhibits the endoglucanase-mediated release of elicitor-active glucan oligosaccharides from P.sojae cell walls. In Phytophthora sojae (Soybean stem and root rot agent), this protein is Glucanase inhibitor protein 3.